We begin with the raw amino-acid sequence, 216 residues long: MIMNFNMEEWEPRTQLGRLVKEGVITSIDEIFEEGHPIMELEIIDALLPDLEEEVIDVNLVQRMHKSGRKVNFRVIVAVGNKDGYVGLGQGKAREVGPAIRKAVDDAKFNIIKVRRGCGDWGCVCGREHTVPFKVSGKSGSVRVTLIPAPGGVGLAIGDVGKTIMRLAGIDDVWSHTRGQTQTTVNFARATFDALKQLSKVKASEKDLKNLGVCST.

Residues 51–114 (LEEEVIDVNL…DDAKFNIIKV (64 aa)) enclose the S5 DRBM domain.

Belongs to the universal ribosomal protein uS5 family. In terms of assembly, part of the 30S ribosomal subunit. Contacts protein S4.

In terms of biological role, with S4 and S12 plays an important role in translational accuracy. The protein is Small ribosomal subunit protein uS5 of Methanothermobacter thermautotrophicus (strain ATCC 29096 / DSM 1053 / JCM 10044 / NBRC 100330 / Delta H) (Methanobacterium thermoautotrophicum).